The sequence spans 316 residues: Methionyl-tRNA formyltransferase (316 aa).

(6S)-5,6,7,8-tetrahydrofolate is bound at residue 110-113; the sequence is SLLP.

This sequence belongs to the Fmt family.

It carries out the reaction L-methionyl-tRNA(fMet) + (6R)-10-formyltetrahydrofolate = N-formyl-L-methionyl-tRNA(fMet) + (6S)-5,6,7,8-tetrahydrofolate + H(+). Functionally, attaches a formyl group to the free amino group of methionyl-tRNA(fMet). The formyl group appears to play a dual role in the initiator identity of N-formylmethionyl-tRNA by promoting its recognition by IF2 and preventing the misappropriation of this tRNA by the elongation apparatus. The sequence is that of Methionyl-tRNA formyltransferase from Bacillus licheniformis (strain ATCC 14580 / DSM 13 / JCM 2505 / CCUG 7422 / NBRC 12200 / NCIMB 9375 / NCTC 10341 / NRRL NRS-1264 / Gibson 46).